Here is a 270-residue protein sequence, read N- to C-terminus: Type III pantothenate kinase (270 aa).

11 to 18 provides a ligand contact to ATP; the sequence is DAGNSRIK. Substrate-binding positions include tyrosine 96 and 103-106; that span reads GSDR. The Proton acceptor role is filled by aspartate 105. Residue threonine 129 coordinates ATP. Threonine 195 provides a ligand contact to substrate.

The protein belongs to the type III pantothenate kinase family. In terms of assembly, homodimer. NH4(+) serves as cofactor. It depends on K(+) as a cofactor.

Its subcellular location is the cytoplasm. It carries out the reaction (R)-pantothenate + ATP = (R)-4'-phosphopantothenate + ADP + H(+). The protein operates within cofactor biosynthesis; coenzyme A biosynthesis; CoA from (R)-pantothenate: step 1/5. Its function is as follows. Catalyzes the phosphorylation of pantothenate (Pan), the first step in CoA biosynthesis. The sequence is that of Type III pantothenate kinase from Paraburkholderia xenovorans (strain LB400).